A 796-amino-acid chain; its full sequence is Disintegrin and metalloproteinase domain-containing protein B (796 aa).

An N-terminal signal peptide occupies residues 1-23 (MKALSCLLAVIATAGSLFQHVDA). The Extracellular segment spans residues 24–706 (RSHARDRLNN…VSDWVSRHKP (683 aa)). N-linked (GlcNAc...) asparagine glycans are attached at residues N33, N226, N313, and N407. The Peptidase M12B domain maps to 271 to 510 (RVALIGVVAD…HSILTNCLTT (240 aa)). Cystine bridges form between C395/C495, C448/C459, and C580/C600. Zn(2+) is bound at residue H431. E432 is an active-site residue. Residues H435 and H441 each contribute to the Zn(2+) site. One can recognise a Disintegrin domain in the interval 519 to 608 (GQQCGNGIVE…DCPRDTHSKN (90 aa)). Residues 707-727 (IVIGVAVGVGCLLLLAILSCI) form a helical membrane-spanning segment. The Cytoplasmic portion of the chain corresponds to 728–796 (CGRSKKRRPR…PGRMPSTRYA (69 aa)). Residues 737–796 (RNRKMAPINMRPMPPVYNGWTGPPPNAESPGGHPQYNHVPPPINAPPPAYPGRMPSTRYA) are disordered. The segment covering 775 to 786 (VPPPINAPPPAY) has biased composition (pro residues).

It depends on Zn(2+) as a cofactor.

The protein localises to the membrane. Its function is as follows. Probable zinc protease. This is Disintegrin and metalloproteinase domain-containing protein B (ADM-B) from Arthroderma otae (strain ATCC MYA-4605 / CBS 113480) (Microsporum canis).